The following is a 419-amino-acid chain: MQKLIIHGGKPLKGIINISGAKNAVLPIMAASILTDKLHITNVPKLTDVSTMKELLKSHGAGIEIIEHENEFELVINAANINNLTADYEIVRKMRASIWVLGPLLSRYGKAKVSLPGGCAIGARQVDLHIAVLKAMGAEITIEDGYINASTAGRLKGTHFIFDKISVGATINAVLAAVLADGETLLFNCAREPEIVDLCNCLNKMGADISGIGTSEIRINGKDSLSEASYRVLPDRIEAGTYMFAAAITKGDLKLYGIDYHIIENIALKLIETGIKVMPIDNGVQVTYADKLNAVNLETNPYPGFATDLQAQFMSLMTISQGSSIITENIFENRFMHVPELCRMGADITVRGNQAIVQGVKGLKGAEVMASDLRASVSLILAGLSTDSETVLHRIYHLDRGFQNLEKKLNNCGADIKRV.

22–23 (KN) is a binding site for phosphoenolpyruvate. Arg-95 is a UDP-N-acetyl-alpha-D-glucosamine binding site. The Proton donor role is filled by Cys-119. 2-(S-cysteinyl)pyruvic acid O-phosphothioketal is present on Cys-119. UDP-N-acetyl-alpha-D-glucosamine is bound by residues Asp-308 and Ile-330.

It belongs to the EPSP synthase family. MurA subfamily.

The protein resides in the cytoplasm. It carries out the reaction phosphoenolpyruvate + UDP-N-acetyl-alpha-D-glucosamine = UDP-N-acetyl-3-O-(1-carboxyvinyl)-alpha-D-glucosamine + phosphate. Its pathway is cell wall biogenesis; peptidoglycan biosynthesis. Cell wall formation. Adds enolpyruvyl to UDP-N-acetylglucosamine. This chain is UDP-N-acetylglucosamine 1-carboxyvinyltransferase, found in Rickettsia bellii (strain OSU 85-389).